Here is a 133-residue protein sequence, read N- to C-terminus: Holo-[acyl-carrier-protein] synthase (133 aa).

2 residues coordinate Mg(2+): Asp8 and Glu58.

The protein belongs to the P-Pant transferase superfamily. AcpS family. Requires Mg(2+) as cofactor.

The protein localises to the cytoplasm. It catalyses the reaction apo-[ACP] + CoA = holo-[ACP] + adenosine 3',5'-bisphosphate + H(+). Its function is as follows. Transfers the 4'-phosphopantetheine moiety from coenzyme A to a Ser of acyl-carrier-protein. The polypeptide is Holo-[acyl-carrier-protein] synthase (Sphingopyxis alaskensis (strain DSM 13593 / LMG 18877 / RB2256) (Sphingomonas alaskensis)).